The chain runs to 255 residues: 1-(5-phosphoribosyl)-5-[(5-phosphoribosylamino)methylideneamino] imidazole-4-carboxamide isomerase (255 aa).

Catalysis depends on D8, which acts as the Proton acceptor. The active-site Proton donor is the D129.

Belongs to the HisA/HisF family.

Its subcellular location is the cytoplasm. It catalyses the reaction 1-(5-phospho-beta-D-ribosyl)-5-[(5-phospho-beta-D-ribosylamino)methylideneamino]imidazole-4-carboxamide = 5-[(5-phospho-1-deoxy-D-ribulos-1-ylimino)methylamino]-1-(5-phospho-beta-D-ribosyl)imidazole-4-carboxamide. The protein operates within amino-acid biosynthesis; L-histidine biosynthesis; L-histidine from 5-phospho-alpha-D-ribose 1-diphosphate: step 4/9. The polypeptide is 1-(5-phosphoribosyl)-5-[(5-phosphoribosylamino)methylideneamino] imidazole-4-carboxamide isomerase (Prochlorococcus marinus (strain MIT 9211)).